The chain runs to 319 residues: MELLSPPLRDVDLTGPDGSLCNFATADDFYDDPCFDSPDLRFFEDLDPRLVHVGALLKPEEHSHFPAAAHPAPGAREDEHVRAPSGHHQAGRCLLWACKACKRKTTNADRRKAATMRERRRLSKVNEAFETLKRCTSSNPNQRLPKVEILRNAIRYIEGLQALLRDQDAAPPGAAAAFYAPGPLPPGRSGEHYSGDSDASSPRSNCSDGMMDYSGPPSGARRRNCYDRAYYSEAPNEPRPGKSAAVSSLDCLSSIVERISTESPAAPALLLADAPPESSPGPQEAAAGSEVECGTPAPSPDTAPQGLAGANPNPIYQVL.

A Peptide (Met-Gly) (interchain with G-Cter in ubiquitin) cross-link involves residue Met-1. N6-methyllysine; by EHMT2 is present on Lys-104. One can recognise a bHLH domain in the interval 109 to 160 (DRRKAATMRERRRLSKVNEAFETLKRCTSSNPNQRLPKVEILRNAIRYIEGL). 2 disordered regions span residues 174 to 222 (AAAA…GARR) and 267 to 319 (PALL…YQVL). A compositionally biased stretch (polar residues) spans 197–207 (SDASSPRSNCS). The segment covering 267 to 276 (PALLLADAPP) has biased composition (low complexity).

Efficient DNA binding requires dimerization with another bHLH protein. Seems to form active heterodimers with ITF-2. Interacts with SUV39H1. Interacts with DDX5. Interacts with CHD2. Interacts with TSC22D3. Interacts with SETD3. Interacts with P-TEFB complex; promotes the transcriptional activity of MYOD1 through its CDK9-mediated phosphorylation. Interacts with CSRP3. Interacts with NUPR1. In terms of processing, phosphorylated by CDK9. This phosphorylation promotes its function in muscle differentiation. Post-translationally, acetylated by a complex containing EP300 and PCAF. The acetylation is essential to activate target genes. Conversely, its deacetylation by SIRT1 inhibits its function. Ubiquitinated on the N-terminus; which is required for proteasomal degradation. In terms of processing, methylation at Lys-104 by EHMT2/G9a inhibits myogenic activity.

The protein localises to the nucleus. In terms of biological role, acts as a transcriptional activator that promotes transcription of muscle-specific target genes and plays a role in muscle differentiation. Together with MYF5 and MYOG, co-occupies muscle-specific gene promoter core region during myogenesis. Induces fibroblasts to differentiate into myoblasts. Interacts with and is inhibited by the twist protein. This interaction probably involves the basic domains of both proteins. The polypeptide is Myoblast determination protein 1 (MYOD1) (Ovis aries (Sheep)).